The primary structure comprises 328 residues: Phosphate acyltransferase (328 aa).

This sequence belongs to the PlsX family. As to quaternary structure, homodimer. Probably interacts with PlsY.

Its subcellular location is the cytoplasm. It carries out the reaction a fatty acyl-[ACP] + phosphate = an acyl phosphate + holo-[ACP]. Its pathway is lipid metabolism; phospholipid metabolism. Catalyzes the reversible formation of acyl-phosphate (acyl-PO(4)) from acyl-[acyl-carrier-protein] (acyl-ACP). This enzyme utilizes acyl-ACP as fatty acyl donor, but not acyl-CoA. The protein is Phosphate acyltransferase of Staphylococcus haemolyticus (strain JCSC1435).